The following is a 421-amino-acid chain: Alpha-1-antiproteinase 2 (421 aa).

Residues 1-24 (MPSSVPWCLLLLAGLCCLVPSSLA) form the signal peptide. 3 N-linked (GlcNAc...) asparagine glycosylation sites follow: N73, N110, and N274. The tract at residues 376-395 (GTTMWEIMPISLPPDLKFNR) is RCL.

It belongs to the serpin family. Post-translationally, N-glycosylated with carbohydrates having biantennary side chains. As to expression, plasma.

The protein localises to the secreted. Functionally, inhibitor of serine proteases. The sequence is that of Alpha-1-antiproteinase 2 from Equus caballus (Horse).